Consider the following 356-residue polypeptide: S-adenosylmethionine:tRNA ribosyltransferase-isomerase (356 aa).

Belongs to the QueA family. As to quaternary structure, monomer.

It localises to the cytoplasm. It catalyses the reaction 7-aminomethyl-7-carbaguanosine(34) in tRNA + S-adenosyl-L-methionine = epoxyqueuosine(34) in tRNA + adenine + L-methionine + 2 H(+). It functions in the pathway tRNA modification; tRNA-queuosine biosynthesis. Transfers and isomerizes the ribose moiety from AdoMet to the 7-aminomethyl group of 7-deazaguanine (preQ1-tRNA) to give epoxyqueuosine (oQ-tRNA). The polypeptide is S-adenosylmethionine:tRNA ribosyltransferase-isomerase (Shigella boydii serotype 4 (strain Sb227)).